The following is a 376-amino-acid chain: 23S rRNA (uracil(747)-C(5))-methyltransferase RlmC (376 aa).

Cysteine 3, cysteine 11, cysteine 14, and cysteine 87 together coordinate [4Fe-4S] cluster. Residues glutamine 212, phenylalanine 241, glutamate 262, and asparagine 307 each coordinate S-adenosyl-L-methionine. The active-site Nucleophile is cysteine 334.

It belongs to the class I-like SAM-binding methyltransferase superfamily. RNA M5U methyltransferase family. RlmC subfamily.

The catalysed reaction is uridine(747) in 23S rRNA + S-adenosyl-L-methionine = 5-methyluridine(747) in 23S rRNA + S-adenosyl-L-homocysteine + H(+). Functionally, catalyzes the formation of 5-methyl-uridine at position 747 (m5U747) in 23S rRNA. The chain is 23S rRNA (uracil(747)-C(5))-methyltransferase RlmC from Salmonella choleraesuis (strain SC-B67).